Consider the following 274-residue polypeptide: Putative outer membrane protein CPn_1073/CP_0776/CPj1073/CpB1118 (274 aa).

An N-terminal signal peptide occupies residues 1–21; the sequence is MRRYLFMVLALCLYRAAPLEA.

The protein resides in the cell outer membrane. The chain is Putative outer membrane protein CPn_1073/CP_0776/CPj1073/CpB1118 from Chlamydia pneumoniae (Chlamydophila pneumoniae).